Reading from the N-terminus, the 344-residue chain is Methionine import ATP-binding protein MetN (344 aa).

One can recognise an ABC transporter domain in the interval 2–241; the sequence is IEINRVNKVF…PKTELARKFI (240 aa). Residue 38 to 45 participates in ATP binding; that stretch reads GSSGAGKS.

This sequence belongs to the ABC transporter superfamily. Methionine importer (TC 3.A.1.24) family. As to quaternary structure, the complex is composed of two ATP-binding proteins (MetN), two transmembrane proteins (MetI) and a solute-binding protein (MetQ).

The protein localises to the cell inner membrane. The enzyme catalyses L-methionine(out) + ATP + H2O = L-methionine(in) + ADP + phosphate + H(+). It carries out the reaction D-methionine(out) + ATP + H2O = D-methionine(in) + ADP + phosphate + H(+). Its function is as follows. Part of the ABC transporter complex MetNIQ involved in methionine import. Responsible for energy coupling to the transport system. The polypeptide is Methionine import ATP-binding protein MetN (Photobacterium profundum (strain SS9)).